Here is a 554-residue protein sequence, read N- to C-terminus: Carboxypeptidase Y homolog A (554 aa).

An N-terminal signal peptide occupies residues 1–17 (MRISASTVLLGAASAAS). A propeptide spanning residues 18–137 (AASFQNQAQQ…QLDNFNLRVK (120 aa)) is cleaved from the precursor. Cystine bridges form between Cys-191-Cys-431, Cys-325-Cys-339, Cys-349-Cys-372, Cys-356-Cys-365, and Cys-394-Cys-401. A glycan (N-linked (GlcNAc...) asparagine) is linked at Asn-222. Ser-278 is an active-site residue. Asp-470 is an active-site residue. The N-linked (GlcNAc...) asparagine glycan is linked to Asn-518. His-529 is an active-site residue.

This sequence belongs to the peptidase S10 family.

The protein resides in the vacuole. The enzyme catalyses Release of a C-terminal amino acid with broad specificity.. Its function is as follows. Vacuolar carboxypeptidase involved in degradation of small peptides. Digests preferentially peptides containing an aliphatic or hydrophobic residue in P1' position, as well as methionine, leucine or phenylalanine in P1 position of ester substrate. This Sordaria macrospora (strain ATCC MYA-333 / DSM 997 / K(L3346) / K-hell) protein is Carboxypeptidase Y homolog A (CPYA).